Here is a 160-residue protein sequence, read N- to C-terminus: SsrA-binding protein (160 aa).

The segment at 131–160 is disordered; the sequence is KKEYDKRDTEKARDSDREIQRAIRSKGKED.

It belongs to the SmpB family.

It localises to the cytoplasm. In terms of biological role, required for rescue of stalled ribosomes mediated by trans-translation. Binds to transfer-messenger RNA (tmRNA), required for stable association of tmRNA with ribosomes. tmRNA and SmpB together mimic tRNA shape, replacing the anticodon stem-loop with SmpB. tmRNA is encoded by the ssrA gene; the 2 termini fold to resemble tRNA(Ala) and it encodes a 'tag peptide', a short internal open reading frame. During trans-translation Ala-aminoacylated tmRNA acts like a tRNA, entering the A-site of stalled ribosomes, displacing the stalled mRNA. The ribosome then switches to translate the ORF on the tmRNA; the nascent peptide is terminated with the 'tag peptide' encoded by the tmRNA and targeted for degradation. The ribosome is freed to recommence translation, which seems to be the essential function of trans-translation. This chain is SsrA-binding protein, found in Azotobacter vinelandii (strain DJ / ATCC BAA-1303).